Here is a 328-residue protein sequence, read N- to C-terminus: MGAAPRLSAPRVLVLWAALGAAAHIGPAPDPEDWWSYKDNLQGNFVPGPPFWGLVNAAWSLCAVGKRQSPVDVDLKRVLYDPFLPPLRLSTGGEKLRGTLYNTGRHVSFLPAPRPVVNVSGGPLLYSHRLSELRLLFGARDGAGSEHQINHQGFSAEVQLIHFNQELYGNLSAATRGPNGLAILSLFVNVAGSSNPFLSRLLNRDTITRISYKNDAYFLQDLSLELLFPESFGFITYQGSLSTPPCSETVTWILIDRALNITSLQMHSLRLLSQNPPSQIFQSLSGNGRPLQPLAHRALRGNRDPRHPERRCRGPNYRLHVDDVPHGL.

The signal sequence occupies residues 1-23 (MGAAPRLSAPRVLVLWAALGAAA). In terms of domain architecture, Alpha-carbonic anhydrase spans 33–303 (DWWSYKDNLQ…LAHRALRGNR (271 aa)). Residue Asn118 is glycosylated (N-linked (GlcNAc...) asparagine). A disordered region spans residues 300–328 (RGNRDPRHPERRCRGPNYRLHVDDVPHGL). The segment covering 319–328 (LHVDDVPHGL) has biased composition (basic and acidic residues).

Belongs to the alpha-carbonic anhydrase family.

The protein resides in the secreted. In terms of biological role, does not have a catalytic activity. In Ovis aries (Sheep), this protein is Carbonic anhydrase-related protein 11 (CA11).